Reading from the N-terminus, the 52-residue chain is MYKLCILFLVVIFAVMAIAKECIPSNQQCSTISPPCCSGNCVLQGKHFSICA.

The first 19 residues, Met1–Ala19, serve as a signal peptide directing secretion. Intrachain disulfides connect Cys22-Cys37, Cys29-Cys41, and Cys36-Cys51.

As to expression, abundantly expressed by teratocytes, which are extra-embryonic cells released by parasitoid wasps into their hosts during larval eclosion.

The protein localises to the secreted. Its function is as follows. This endoparasitoid wasp peptide has immununosuppressive, antimicrobial and insecticidal activities. Suppress cellular immunity which is detectable as a reduction of hemocyte encapsulation in the host. Shows potent antifungal activity against C.albicans (MIC~0.25 ug/ml). In vivo, ingestion of this peptide (probably at excessive doses) increases larval mortality and reduces leaf consumption of D.saccharalis, a permissive host for C.flavipes. The protein is Teratocyte protein CftICK-I of Cotesia flavipes (Parasitic wasp).